Here is a 146-residue protein sequence, read N- to C-terminus: Flagellar assembly factor FliW (146 aa).

The protein belongs to the FliW family. As to quaternary structure, interacts with translational regulator CsrA and flagellin(s).

It is found in the cytoplasm. Acts as an anti-CsrA protein, binds CsrA and prevents it from repressing translation of its target genes, one of which is flagellin. Binds to flagellin and participates in the assembly of the flagellum. This Azoarcus sp. (strain BH72) protein is Flagellar assembly factor FliW.